Here is a 633-residue protein sequence, read N- to C-terminus: DNA mismatch repair protein MutL (633 aa).

Disordered stretches follow at residues 336-364 (VRPD…GEFG) and 384-405 (GWSG…TRPE). Over residues 388–401 (GASSSGASSGYSAY) the composition is skewed to low complexity.

This sequence belongs to the DNA mismatch repair MutL/HexB family.

In terms of biological role, this protein is involved in the repair of mismatches in DNA. It is required for dam-dependent methyl-directed DNA mismatch repair. May act as a 'molecular matchmaker', a protein that promotes the formation of a stable complex between two or more DNA-binding proteins in an ATP-dependent manner without itself being part of a final effector complex. The chain is DNA mismatch repair protein MutL from Pseudomonas paraeruginosa (strain DSM 24068 / PA7) (Pseudomonas aeruginosa (strain PA7)).